The sequence spans 183 residues: Adenine phosphoribosyltransferase (183 aa).

It belongs to the purine/pyrimidine phosphoribosyltransferase family. As to quaternary structure, homodimer.

The protein resides in the cytoplasm. It catalyses the reaction AMP + diphosphate = 5-phospho-alpha-D-ribose 1-diphosphate + adenine. It participates in purine metabolism; AMP biosynthesis via salvage pathway; AMP from adenine: step 1/1. Catalyzes a salvage reaction resulting in the formation of AMP, that is energically less costly than de novo synthesis. The chain is Adenine phosphoribosyltransferase from Proteus mirabilis (strain HI4320).